Reading from the N-terminus, the 419-residue chain is Protein distal antenna-related (419 aa).

Residues 15–66 (TRGKRPLRNLTPNDKVRAIQRIHNGETKASVSRDIGVPESTLRGWCKNEQKL) form the HTH psq-type domain. The H-T-H motif DNA-binding region spans 42 to 62 (KASVSRDIGVPESTLRGWCKN). Disordered stretches follow at residues 333–359 (QPGGGGPGGPSYNPNQMASGGSEPDLE) and 378–419 (EASN…DAEQ).

Interacts with itself, dan, ey and dac to form a complex (or complexes) containing the RD factors. Coexpressed with dan in the presumptive distal antenna, but not in the leg imaginal disk. Both proteins are also expressed in the brain and the eye region of the eye-antenna disk. First detected in early L3 eye disks in cells surrounding the newly initiated morphogenetic furrow. Highly expressed in evenly spaced clusters of cells anterior to the furrow, lower levels within and posterior to the furrow.

It localises to the nucleus. Functionally, probable transcription factor with a role in the retinal determination (RD) network. Regulates ato expression and is required for normal R8 induction and differentiation. Danr appears to repress Dan expression, but Dan is required for Danr expression anterior to the morphogenetic furrow (MF). Dan and Danr lie downstream of so and require dac function for highest levels of expression. Contributes to differentiation of antenna-specific characteristics; effector gene that acts downstream of homothorax (hth), Distal-less (Dll), cut (ct) and spineless (ss) genes to control differentiation of distal antennal structures. The protein is Protein distal antenna-related of Drosophila melanogaster (Fruit fly).